A 902-amino-acid polypeptide reads, in one-letter code: Protein translocase subunit SecA (902 aa).

Residues glutamine 89, 107-111 (GEGKT), and aspartate 502 contribute to the ATP site. Residues cysteine 884, cysteine 886, cysteine 895, and histidine 896 each contribute to the Zn(2+) site.

The protein belongs to the SecA family. As to quaternary structure, monomer and homodimer. Part of the essential Sec protein translocation apparatus which comprises SecA, SecYEG and auxiliary proteins SecDF-YajC and YidC. The cofactor is Zn(2+).

It localises to the cell inner membrane. It is found in the cytoplasm. It catalyses the reaction ATP + H2O + cellular proteinSide 1 = ADP + phosphate + cellular proteinSide 2.. In terms of biological role, part of the Sec protein translocase complex. Interacts with the SecYEG preprotein conducting channel. Has a central role in coupling the hydrolysis of ATP to the transfer of proteins into and across the cell membrane, serving both as a receptor for the preprotein-SecB complex and as an ATP-driven molecular motor driving the stepwise translocation of polypeptide chains across the membrane. The polypeptide is Protein translocase subunit SecA (Agrobacterium fabrum (strain C58 / ATCC 33970) (Agrobacterium tumefaciens (strain C58))).